Reading from the N-terminus, the 292-residue chain is tRNA pseudouridine synthase B (292 aa).

Catalysis depends on aspartate 38, which acts as the Nucleophile.

This sequence belongs to the pseudouridine synthase TruB family. Type 1 subfamily.

It catalyses the reaction uridine(55) in tRNA = pseudouridine(55) in tRNA. Its function is as follows. Responsible for synthesis of pseudouridine from uracil-55 in the psi GC loop of transfer RNAs. This Streptococcus gordonii (strain Challis / ATCC 35105 / BCRC 15272 / CH1 / DL1 / V288) protein is tRNA pseudouridine synthase B.